A 336-amino-acid polypeptide reads, in one-letter code: Aspartate--ammonia ligase (336 aa).

The protein belongs to the class-II aminoacyl-tRNA synthetase family. AsnA subfamily.

It is found in the cytoplasm. The enzyme catalyses L-aspartate + NH4(+) + ATP = L-asparagine + AMP + diphosphate + H(+). It functions in the pathway amino-acid biosynthesis; L-asparagine biosynthesis; L-asparagine from L-aspartate (ammonia route): step 1/1. This Limosilactobacillus fermentum (strain NBRC 3956 / LMG 18251) (Lactobacillus fermentum) protein is Aspartate--ammonia ligase.